Consider the following 430-residue polypeptide: Histidinol dehydrogenase (430 aa).

The NAD(+) site is built by tyrosine 129, glutamine 190, and asparagine 213. Substrate is bound by residues serine 236, glutamine 258, and histidine 261. Zn(2+) contacts are provided by glutamine 258 and histidine 261. Active-site proton acceptor residues include glutamate 326 and histidine 327. Substrate-binding residues include histidine 327, aspartate 360, glutamate 414, and histidine 419. Aspartate 360 serves as a coordination point for Zn(2+). Histidine 419 contributes to the Zn(2+) binding site.

The protein belongs to the histidinol dehydrogenase family. It depends on Zn(2+) as a cofactor.

The catalysed reaction is L-histidinol + 2 NAD(+) + H2O = L-histidine + 2 NADH + 3 H(+). It functions in the pathway amino-acid biosynthesis; L-histidine biosynthesis; L-histidine from 5-phospho-alpha-D-ribose 1-diphosphate: step 9/9. Its function is as follows. Catalyzes the sequential NAD-dependent oxidations of L-histidinol to L-histidinaldehyde and then to L-histidine. The protein is Histidinol dehydrogenase of Gluconobacter oxydans (strain 621H) (Gluconobacter suboxydans).